The chain runs to 148 residues: Caltractin (148 aa).

4 EF-hand domains span residues 4-39 (EQKQEXREAFDLFDTDGSGTIDAKELKVXMXALGFE), 40-75 (PKKEEIQKMISDIDKDGSGTIDFEEFLQMMTAKMGE), 77-112 (DSREEIMKAFRLFDDDQTGKITFKNLKRVAKELGEN), and 113-148 (LTDEEIQEMIDEADRDGDGEINEEEFFRIMKKTSLF). 10 residues coordinate Ca(2+): D17, D19, S21, T23, E28, D53, D55, S57, T59, and E64. Ca(2+) is bound by residues D126, D128, D130, E132, and E137.

It belongs to the centrin family. As to expression, ubiquitous.

Functionally, this calcium-binding protein is found in the basal body complexes (the functional homolog of the centrosome in animal cell). In mitotic cells it is specifically associated with the poles of the mitotic spindles at the sites of the duplicated basal body complexes. The sequence is that of Caltractin from Spermatozopsis similis (Green alga).